The sequence spans 272 residues: Undecaprenyl-diphosphatase (272 aa).

A run of 8 helical transmembrane segments spans residues 5–25 (YSLF…FLPV), 45–65 (AKTF…VVFW), 88–108 (HLTL…GLAF), 115–135 (LFNP…LLAA), 152–171 (TYRQ…WPGF), 189–209 (YAAS…ASGL), 221–241 (GDLP…LIAI), and 251–271 (ISFV…YWVF).

Belongs to the UppP family.

It is found in the cell inner membrane. It catalyses the reaction di-trans,octa-cis-undecaprenyl diphosphate + H2O = di-trans,octa-cis-undecaprenyl phosphate + phosphate + H(+). Its function is as follows. Catalyzes the dephosphorylation of undecaprenyl diphosphate (UPP). Confers resistance to bacitracin. The chain is Undecaprenyl-diphosphatase from Yersinia enterocolitica serotype O:8 / biotype 1B (strain NCTC 13174 / 8081).